The sequence spans 416 residues: Serine hydroxymethyltransferase (416 aa).

(6S)-5,6,7,8-tetrahydrofolate contacts are provided by residues Leu-121 and 125–127 (GHL). An N6-(pyridoxal phosphate)lysine modification is found at Lys-229. Residues Glu-245 and 354 to 356 (SPF) each bind (6S)-5,6,7,8-tetrahydrofolate.

Belongs to the SHMT family. In terms of assembly, homodimer. Pyridoxal 5'-phosphate is required as a cofactor.

Its subcellular location is the cytoplasm. The catalysed reaction is (6R)-5,10-methylene-5,6,7,8-tetrahydrofolate + glycine + H2O = (6S)-5,6,7,8-tetrahydrofolate + L-serine. It functions in the pathway one-carbon metabolism; tetrahydrofolate interconversion. The protein operates within amino-acid biosynthesis; glycine biosynthesis; glycine from L-serine: step 1/1. Catalyzes the reversible interconversion of serine and glycine with tetrahydrofolate (THF) serving as the one-carbon carrier. This reaction serves as the major source of one-carbon groups required for the biosynthesis of purines, thymidylate, methionine, and other important biomolecules. Also exhibits THF-independent aldolase activity toward beta-hydroxyamino acids, producing glycine and aldehydes, via a retro-aldol mechanism. The polypeptide is Serine hydroxymethyltransferase (Aliivibrio salmonicida (strain LFI1238) (Vibrio salmonicida (strain LFI1238))).